Consider the following 328-residue polypeptide: Tetraacyldisaccharide 4'-kinase (328 aa).

An ATP-binding site is contributed by 55-62; sequence TAGGNGKT.

This sequence belongs to the LpxK family.

It catalyses the reaction a lipid A disaccharide + ATP = a lipid IVA + ADP + H(+). It functions in the pathway glycolipid biosynthesis; lipid IV(A) biosynthesis; lipid IV(A) from (3R)-3-hydroxytetradecanoyl-[acyl-carrier-protein] and UDP-N-acetyl-alpha-D-glucosamine: step 6/6. In terms of biological role, transfers the gamma-phosphate of ATP to the 4'-position of a tetraacyldisaccharide 1-phosphate intermediate (termed DS-1-P) to form tetraacyldisaccharide 1,4'-bis-phosphate (lipid IVA). This Escherichia fergusonii (strain ATCC 35469 / DSM 13698 / CCUG 18766 / IAM 14443 / JCM 21226 / LMG 7866 / NBRC 102419 / NCTC 12128 / CDC 0568-73) protein is Tetraacyldisaccharide 4'-kinase.